Reading from the N-terminus, the 331-residue chain is XylDLEGF operon transcriptional activator 3 (331 aa).

The 102-residue stretch at glutamate 214 to arginine 315 folds into the HTH araC/xylS-type domain. 2 consecutive DNA-binding regions (H-T-H motif) follow at residues glutamate 231–alanine 252 and valine 282–phenylalanine 305.

It localises to the cytoplasm. Functionally, regulatory protein of the TOL plasmid xyl operons. XylS activates the xylXYZLTEGFJQKIH operon required for the degradation of toluene, m-xylene and p-xylene. This Pseudomonas putida (Arthrobacter siderocapsulatus) protein is XylDLEGF operon transcriptional activator 3 (xylS3).